The primary structure comprises 228 residues: 5'-methylthioadenosine/S-adenosylhomocysteine nucleosidase (228 aa).

The active-site Proton acceptor is Glu-11. Substrate contacts are provided by residues Gly-77, Ile-151, and 172 to 173 (ME). The active-site Proton donor is the Asp-196.

This sequence belongs to the PNP/UDP phosphorylase family. MtnN subfamily.

The enzyme catalyses S-adenosyl-L-homocysteine + H2O = S-(5-deoxy-D-ribos-5-yl)-L-homocysteine + adenine. The catalysed reaction is S-methyl-5'-thioadenosine + H2O = 5-(methylsulfanyl)-D-ribose + adenine. It carries out the reaction 5'-deoxyadenosine + H2O = 5-deoxy-D-ribose + adenine. The protein operates within amino-acid biosynthesis; L-methionine biosynthesis via salvage pathway; S-methyl-5-thio-alpha-D-ribose 1-phosphate from S-methyl-5'-thioadenosine (hydrolase route): step 1/2. Catalyzes the irreversible cleavage of the glycosidic bond in both 5'-methylthioadenosine (MTA) and S-adenosylhomocysteine (SAH/AdoHcy) to adenine and the corresponding thioribose, 5'-methylthioribose and S-ribosylhomocysteine, respectively. Also cleaves 5'-deoxyadenosine, a toxic by-product of radical S-adenosylmethionine (SAM) enzymes, into 5-deoxyribose and adenine. The protein is 5'-methylthioadenosine/S-adenosylhomocysteine nucleosidase of Staphylococcus haemolyticus (strain JCSC1435).